The following is a 206-amino-acid chain: Translation initiation factor IF-3 (206 aa).

The protein belongs to the IF-3 family. As to quaternary structure, monomer.

Its subcellular location is the cytoplasm. In terms of biological role, IF-3 binds to the 30S ribosomal subunit and shifts the equilibrium between 70S ribosomes and their 50S and 30S subunits in favor of the free subunits, thus enhancing the availability of 30S subunits on which protein synthesis initiation begins. This is Translation initiation factor IF-3 from Chlorobium luteolum (strain DSM 273 / BCRC 81028 / 2530) (Pelodictyon luteolum).